Here is a 402-residue protein sequence, read N- to C-terminus: Probable 2,3-bisphosphoglycerate-independent phosphoglycerate mutase (402 aa).

Belongs to the BPG-independent phosphoglycerate mutase family. A-PGAM subfamily.

It carries out the reaction (2R)-2-phosphoglycerate = (2R)-3-phosphoglycerate. It functions in the pathway carbohydrate degradation; glycolysis; pyruvate from D-glyceraldehyde 3-phosphate: step 3/5. Its function is as follows. Catalyzes the interconversion of 2-phosphoglycerate and 3-phosphoglycerate. The sequence is that of Probable 2,3-bisphosphoglycerate-independent phosphoglycerate mutase from Thermosipho africanus (strain TCF52B).